We begin with the raw amino-acid sequence, 145 residues long: uncharacterized protein (145 aa).

A helical membrane pass occupies residues 1-21 (MWFLVKATFWFSLVLVLLPFL). The tract at residues 109–145 (TPAESVPSAEATEKAEPAFKRMPVPEHRLDPGPASGK) is disordered. A compositionally biased stretch (basic and acidic residues) spans 119-138 (ATEKAEPAFKRMPVPEHRLD).

The protein resides in the membrane. This is an uncharacterized protein from Rhizobium meliloti (strain 1021) (Ensifer meliloti).